The chain runs to 173 residues: Peptide deformylase (173 aa).

Positions 94 and 136 each coordinate Fe cation. Glu-137 is a catalytic residue. His-140 provides a ligand contact to Fe cation.

It belongs to the polypeptide deformylase family. The cofactor is Fe(2+).

The enzyme catalyses N-terminal N-formyl-L-methionyl-[peptide] + H2O = N-terminal L-methionyl-[peptide] + formate. In terms of biological role, removes the formyl group from the N-terminal Met of newly synthesized proteins. Requires at least a dipeptide for an efficient rate of reaction. N-terminal L-methionine is a prerequisite for activity but the enzyme has broad specificity at other positions. This chain is Peptide deformylase, found in Desulfosudis oleivorans (strain DSM 6200 / JCM 39069 / Hxd3) (Desulfococcus oleovorans).